The following is a 129-amino-acid chain: UPF0325 protein PC1_0937 (129 aa).

It belongs to the UPF0325 family.

The chain is UPF0325 protein PC1_0937 from Pectobacterium carotovorum subsp. carotovorum (strain PC1).